The primary structure comprises 528 residues: MSSVQSEGQRKPAIVILDFGSQYSELIARRVRETEVFSVVLGYSTSAEELRALAPRGIILSGGPSSVYADEAPLCDPAIWDLGVPVLGVCYGMQLMVQQLGGQVVAATGKAEYGKAPLKVDDPTALLTNVESGSTMWMSHGDSVEALPDGFLRLAHTANTPEAAIANHKRRLYGVQFHPEVVHSTGGMVMIRNFVYHICGCEPDWTTEAFIDEAVANVRDQVGQKRVLLALSGGVDSSTLAFLLKKAIGDQLTCMFIDQGFMRKGEPEFLMEFFDRKFNIHVEYINARERFIKKLDGITDPEEKRKIIGTEFIRVFEEESRRLGPFDYLVQGTLYPDVIESAGTNVDPKTGERVAVKIKSHHNVGGLPKDLRFKLVEPLRKLFKDEVRKVGRTLGLPEEIVSRHPFPGPGLAIRILGEVTEEKLDCLRDADLIVREEVNAAGLYHDIWQAFAVLLPVRSVGVMGDKRTYAWPIVLRCVSSEDGMTADWSRLPYDLMEVISNRIVNEVKGVNRVVMDITSKPPGTIEWE.

The 192-residue stretch at 13–204 (AIVILDFGSQ…VYHICGCEPD (192 aa)) folds into the Glutamine amidotransferase type-1 domain. The active-site Nucleophile is the Cys90. Residues His178 and Glu180 contribute to the active site. In terms of domain architecture, GMPS ATP-PPase spans 205–403 (WTTEAFIDEA…LGLPEEIVSR (199 aa)). 232-238 (SGGVDSS) contributes to the ATP binding site.

In terms of assembly, homodimer.

It catalyses the reaction XMP + L-glutamine + ATP + H2O = GMP + L-glutamate + AMP + diphosphate + 2 H(+). It functions in the pathway purine metabolism; GMP biosynthesis; GMP from XMP (L-Gln route): step 1/1. Functionally, catalyzes the synthesis of GMP from XMP. The chain is GMP synthase [glutamine-hydrolyzing] from Synechococcus sp. (strain CC9311).